Here is a 154-residue protein sequence, read N- to C-terminus: Large ribosomal subunit protein eL24 (154 aa).

The interval 92 to 154 (AKRNQKPEVR…AAAPRVGGKR (63 aa)) is disordered. Residues 96 to 122 (QKPEVRKAQREQAVKAAKEKKKADQVG) are compositionally biased toward basic and acidic residues. Over residues 129 to 154 (KARATAPKTKAPKTVKAAAPRVGGKR) the composition is skewed to low complexity.

The protein belongs to the eukaryotic ribosomal protein eL24 family.

This chain is Large ribosomal subunit protein eL24 (RPL24), found in Branchiostoma belcheri (Amphioxus).